A 331-amino-acid chain; its full sequence is Ferredoxin--NADP reductase 2 (331 aa).

Residues Glu37, Gln45, Tyr50, Val90, Phe124, Asp286, and Thr327 each contribute to the FAD site.

Belongs to the ferredoxin--NADP reductase type 2 family. As to quaternary structure, homodimer. FAD is required as a cofactor.

It carries out the reaction 2 reduced [2Fe-2S]-[ferredoxin] + NADP(+) + H(+) = 2 oxidized [2Fe-2S]-[ferredoxin] + NADPH. This Listeria monocytogenes serovar 1/2a (strain ATCC BAA-679 / EGD-e) protein is Ferredoxin--NADP reductase 2.